The following is a 495-amino-acid chain: Probable cytosol aminopeptidase (495 aa).

Residues K258 and D263 each contribute to the Mn(2+) site. Residue K270 is part of the active site. Mn(2+) is bound by residues D281, D340, and E342. The active site involves R344.

This sequence belongs to the peptidase M17 family. It depends on Mn(2+) as a cofactor.

It is found in the cytoplasm. The catalysed reaction is Release of an N-terminal amino acid, Xaa-|-Yaa-, in which Xaa is preferably Leu, but may be other amino acids including Pro although not Arg or Lys, and Yaa may be Pro. Amino acid amides and methyl esters are also readily hydrolyzed, but rates on arylamides are exceedingly low.. It carries out the reaction Release of an N-terminal amino acid, preferentially leucine, but not glutamic or aspartic acids.. In terms of biological role, presumably involved in the processing and regular turnover of intracellular proteins. Catalyzes the removal of unsubstituted N-terminal amino acids from various peptides. In Leptospira interrogans serogroup Icterohaemorrhagiae serovar Lai (strain 56601), this protein is Probable cytosol aminopeptidase.